The following is a 934-amino-acid chain: ATP-dependent RNA helicase dbp-10 (934 aa).

The disordered stretch occupies residues 21-43 (LFNNDSDFEDNSSKHHTKKGAVT). The Q motif signature appears at 99–127 (GGFQAMGLNAHLLRAITRKGFSVPTPIQR). Residues 130–302 (IPLILERKDV…RAGLQEPSLV (173 aa)) enclose the Helicase ATP-binding domain. 143–150 (ARTGSGKT) provides a ligand contact to ATP. Residues 250–253 (DEAD) carry the DEAD box motif. Disordered regions lie at residues 343 to 370 (GPPEGTKEESDELQARKRKREYRPNPKE), 613 to 722 (ELGP…FQDP), and 851 to 934 (GAQP…RQKR). The Helicase C-terminal domain maps to 359–513 (KRKREYRPNP…KNPSFAADVV (155 aa)). Acidic residues-rich tracts occupy residues 644-654 (DEDDEDVDMED) and 662-700 (EETNAFEDFEDEEEEGEAEEAEEAEAKEDPYADDSDSEM). Basic and acidic residues predominate over residues 864-926 (EKAPKDADKF…VAEKKREKNA (63 aa)).

Belongs to the DEAD box helicase family. DDX54/DBP10 subfamily.

The protein localises to the nucleus. It is found in the nucleolus. It carries out the reaction ATP + H2O = ADP + phosphate + H(+). Functionally, ATP-binding RNA helicase involved in the biogenesis of 60S ribosomal subunits and is required for the normal formation of 25S and 5.8S rRNAs. This is ATP-dependent RNA helicase dbp-10 (dbp-10) from Neurospora crassa (strain ATCC 24698 / 74-OR23-1A / CBS 708.71 / DSM 1257 / FGSC 987).